Consider the following 562-residue polypeptide: SLAIN motif-containing protein-like (562 aa).

Disordered stretches follow at residues 292–313 (QDYA…LHSL), 344–381 (HRYS…IQNH), and 409–562 (SLEA…DGCY). Composition is skewed to low complexity over residues 295 to 311 (ASSS…ASLH) and 345 to 355 (RYSPSPLSSPR). Polar residues-rich tracts occupy residues 356 to 370 (CQSP…TTSR), 424 to 442 (QGPS…STPP), 465 to 531 (VSTS…STVP), and 539 to 553 (SRRS…STLG).

Belongs to the SLAIN motif-containing family.

This is SLAIN motif-containing protein-like from Xenopus laevis (African clawed frog).